Consider the following 361-residue polypeptide: Chorismate synthase (361 aa).

NADP(+) contacts are provided by R48 and R54. FMN contacts are provided by residues 125-127, 238-239, G278, 293-297, and R319; these read RSS, NA, and KPTSS.

This sequence belongs to the chorismate synthase family. As to quaternary structure, homotetramer. FMNH2 is required as a cofactor.

The enzyme catalyses 5-O-(1-carboxyvinyl)-3-phosphoshikimate = chorismate + phosphate. The protein operates within metabolic intermediate biosynthesis; chorismate biosynthesis; chorismate from D-erythrose 4-phosphate and phosphoenolpyruvate: step 7/7. Its function is as follows. Catalyzes the anti-1,4-elimination of the C-3 phosphate and the C-6 proR hydrogen from 5-enolpyruvylshikimate-3-phosphate (EPSP) to yield chorismate, which is the branch point compound that serves as the starting substrate for the three terminal pathways of aromatic amino acid biosynthesis. This reaction introduces a second double bond into the aromatic ring system. The chain is Chorismate synthase from Yersinia pseudotuberculosis serotype O:1b (strain IP 31758).